A 425-amino-acid chain; its full sequence is Dihydroorotase (425 aa).

Zn(2+)-binding residues include H59 and H61. Substrate is bound by residues 61-63 (HLR) and N93. Residues D151, H178, and H231 each contribute to the Zn(2+) site. N277 lines the substrate pocket. D304 contacts Zn(2+). D304 is an active-site residue. Substrate-binding positions include H308 and 322–323 (FG).

It belongs to the metallo-dependent hydrolases superfamily. DHOase family. Class I DHOase subfamily. Requires Zn(2+) as cofactor.

It carries out the reaction (S)-dihydroorotate + H2O = N-carbamoyl-L-aspartate + H(+). The protein operates within pyrimidine metabolism; UMP biosynthesis via de novo pathway; (S)-dihydroorotate from bicarbonate: step 3/3. In terms of biological role, catalyzes the reversible cyclization of carbamoyl aspartate to dihydroorotate. The protein is Dihydroorotase of Staphylococcus epidermidis (strain ATCC 35984 / DSM 28319 / BCRC 17069 / CCUG 31568 / BM 3577 / RP62A).